A 545-amino-acid polypeptide reads, in one-letter code: CTP synthase (545 aa).

The tract at residues 1–266 is amidoligase domain; the sequence is MTTNYIFVTG…DDYICKRFSL (266 aa). Residue serine 14 participates in CTP binding. Serine 14 contributes to the UTP binding site. Residues 15-20 and aspartate 72 contribute to the ATP site; that span reads SLGKGI. 2 residues coordinate Mg(2+): aspartate 72 and glutamate 140. Residues 147–149, 187–192, and lysine 223 contribute to the CTP site; these read DIE and KTKPTQ. Residues 187–192 and lysine 223 contribute to the UTP site; that span reads KTKPTQ. Position 239 to 241 (239 to 241) interacts with ATP; it reads KDV. The region spanning 291 to 542 is the Glutamine amidotransferase type-1 domain; the sequence is TIGMVGKYIE…VKAASEYQKR (252 aa). Glycine 352 lines the L-glutamine pocket. The Nucleophile; for glutamine hydrolysis role is filled by cysteine 379. Residues 380-383, glutamate 403, and arginine 470 each bind L-glutamine; that span reads LGMQ. Catalysis depends on residues histidine 515 and glutamate 517.

This sequence belongs to the CTP synthase family. In terms of assembly, homotetramer.

The catalysed reaction is UTP + L-glutamine + ATP + H2O = CTP + L-glutamate + ADP + phosphate + 2 H(+). It carries out the reaction L-glutamine + H2O = L-glutamate + NH4(+). It catalyses the reaction UTP + NH4(+) + ATP = CTP + ADP + phosphate + 2 H(+). The protein operates within pyrimidine metabolism; CTP biosynthesis via de novo pathway; CTP from UDP: step 2/2. With respect to regulation, allosterically activated by GTP, when glutamine is the substrate; GTP has no effect on the reaction when ammonia is the substrate. The allosteric effector GTP functions by stabilizing the protein conformation that binds the tetrahedral intermediate(s) formed during glutamine hydrolysis. Inhibited by the product CTP, via allosteric rather than competitive inhibition. In terms of biological role, catalyzes the ATP-dependent amination of UTP to CTP with either L-glutamine or ammonia as the source of nitrogen. Regulates intracellular CTP levels through interactions with the four ribonucleotide triphosphates. In Enterobacter sp. (strain 638), this protein is CTP synthase.